Here is a 365-residue protein sequence, read N- to C-terminus: 3-dehydroquinate synthase (365 aa).

Residues 69-74 (DGEAHK), 103-107 (GVIGD), 127-128 (TT), Lys140, and Lys149 each bind NAD(+). Residues Glu182, His245, and His262 each contribute to the Zn(2+) site.

The protein belongs to the sugar phosphate cyclases superfamily. Dehydroquinate synthase family. The cofactor is NAD(+). Requires Co(2+) as cofactor. Zn(2+) serves as cofactor.

The protein resides in the cytoplasm. It carries out the reaction 7-phospho-2-dehydro-3-deoxy-D-arabino-heptonate = 3-dehydroquinate + phosphate. It participates in metabolic intermediate biosynthesis; chorismate biosynthesis; chorismate from D-erythrose 4-phosphate and phosphoenolpyruvate: step 2/7. Its function is as follows. Catalyzes the conversion of 3-deoxy-D-arabino-heptulosonate 7-phosphate (DAHP) to dehydroquinate (DHQ). This chain is 3-dehydroquinate synthase, found in Pseudomonas putida (strain ATCC 47054 / DSM 6125 / CFBP 8728 / NCIMB 11950 / KT2440).